A 237-amino-acid polypeptide reads, in one-letter code: Peroxisomal membrane protein 11-1 (237 aa).

Residues 1-92 are Cytoplasmic-facing; the sequence is MSTLDATRAE…TLVLLGKSKN (92 aa). Residues 93-113 traverse the membrane as a helical segment; the sequence is ALLSTFLFLDQFVWLGRTGIY. At 114 to 204 the chain is on the lumenal side; sequence KNKERTDRIV…VGLLQLSPKK (91 aa). A helical transmembrane segment spans residues 205–223; the sequence is ITPRVTGAFGFVTSLISCY. Residues 224–237 lie on the Cytoplasmic side of the membrane; sequence QQLPSRAPAIKVKA.

Belongs to the peroxin-11 family. Expressed in seedlings, leaf sheaths, flag leaf, panicles and spikelets.

The protein localises to the peroxisome membrane. Involved in peroxisomal proliferation. The chain is Peroxisomal membrane protein 11-1 (PEX11-1) from Oryza sativa subsp. japonica (Rice).